Consider the following 204-residue polypeptide: Large ribosomal subunit protein uL4 (204 aa).

Residues 49 to 76 (KTKGISDVSGTTAKPYGQKRTGRARQGS) are disordered.

It belongs to the universal ribosomal protein uL4 family. As to quaternary structure, part of the 50S ribosomal subunit.

In terms of biological role, one of the primary rRNA binding proteins, this protein initially binds near the 5'-end of the 23S rRNA. It is important during the early stages of 50S assembly. It makes multiple contacts with different domains of the 23S rRNA in the assembled 50S subunit and ribosome. Forms part of the polypeptide exit tunnel. The protein is Large ribosomal subunit protein uL4 of Wolbachia pipientis wMel.